Consider the following 745-residue polypeptide: Copper-transporting ATPase (745 aa).

An HMA domain is found at 1–67 (MKESFYIEGM…LIEKLGYSPK (67 aa)). Residues 1–83 (MKESFYIEGM…KKEFFSPNVK (83 aa)) are Cytoplasmic-facing. Cu cation is bound by residues Cys-12 and Cys-15. A helical membrane pass occupies residues 84–104 (LALAVIFTLFVVYLSMGAMLS). Topologically, residues 105 to 124 (PSLLPESLLAIDNHSNFLNA) are extracellular. A helical membrane pass occupies residues 125 to 144 (CLQLIGALIVMHLGRDFYIQ). Topologically, residues 145–151 (GFKALWH) are cytoplasmic. Residues 152 to 172 (RQPNMSSLIAIGTSAALISSL) traverse the membrane as a helical segment. Residues 173–194 (WQLYLVYTNHYTDQWSYGHYYF) are Extracellular-facing. The chain crosses the membrane as a helical span at residues 195–215 (ESVCVILMFVMVGKRIENVSK). At 216–343 (DKALDAMQAL…KAEISRLADK (128 aa)) the chain is on the cytoplasmic side. Residues 344–366 (VSSVFVPSVIAISILAFVVWLII) form a helical membrane-spanning segment. Over 367-379 (APKPDFWWNFGIA) the chain is Extracellular. The helical transmembrane segment at 380 to 397 (LEVFVSVLVISCPCALGL) threads the bilayer. Residues 398-685 (ATPMSILVAN…KLSQATIKNI (288 aa)) are Cytoplasmic-facing. Catalysis depends on Asp-435, which acts as the 4-aspartylphosphate intermediate. Asp-631 and Asp-635 together coordinate Mg(2+). The helical transmembrane segment at 686-705 (KENLFWAFCYNSVFIPLACG) threads the bilayer. Topologically, residues 706 to 716 (VLYKANLMLSP) are extracellular. A helical transmembrane segment spans residues 717 to 735 (AIAGLAMSLSSVSVVLNSQ). Over 736-745 (RLRNFKIKDH) the chain is Cytoplasmic.

It belongs to the cation transport ATPase (P-type) (TC 3.A.3) family. Type IB subfamily.

The protein localises to the cell membrane. The enzyme catalyses Cu(2+)(in) + ATP + H2O = Cu(2+)(out) + ADP + phosphate + H(+). Functionally, probably involved in copper export. This Helicobacter pylori (strain ATCC 700392 / 26695) (Campylobacter pylori) protein is Copper-transporting ATPase (copA).